A 396-amino-acid chain; its full sequence is Acetate kinase (396 aa).

Position 7 (Asn-7) interacts with Mg(2+). An ATP-binding site is contributed by Lys-14. Arg-91 lines the substrate pocket. The active-site Proton donor/acceptor is the Asp-148. ATP is bound by residues 208 to 212 (HLGNG), 283 to 285 (DFR), and 331 to 335 (GLGEN). Residue Glu-384 participates in Mg(2+) binding.

The protein belongs to the acetokinase family. As to quaternary structure, homodimer. Mg(2+) is required as a cofactor. The cofactor is Mn(2+).

The protein resides in the cytoplasm. It carries out the reaction acetate + ATP = acetyl phosphate + ADP. The protein operates within metabolic intermediate biosynthesis; acetyl-CoA biosynthesis; acetyl-CoA from acetate: step 1/2. In terms of biological role, catalyzes the formation of acetyl phosphate from acetate and ATP. Can also catalyze the reverse reaction. The chain is Acetate kinase from Alkaliphilus metalliredigens (strain QYMF).